A 122-amino-acid chain; its full sequence is MARLAGVDLPREKRMEVALTYIFGIGPARSKELLEKTGISPDLRSKDLTDEQLSALRDVIENTWKVEGDLRREIQADIRRKIEIGSYQGLRHRRGLPVRGQRTKTNARTRKGPKKTIAGKKK.

The tract at residues 93–122 is disordered; that stretch reads RRGLPVRGQRTKTNARTRKGPKKTIAGKKK.

Belongs to the universal ribosomal protein uS13 family. In terms of assembly, part of the 30S ribosomal subunit. Forms a loose heterodimer with protein S19. Forms two bridges to the 50S subunit in the 70S ribosome.

Functionally, located at the top of the head of the 30S subunit, it contacts several helices of the 16S rRNA. In the 70S ribosome it contacts the 23S rRNA (bridge B1a) and protein L5 of the 50S subunit (bridge B1b), connecting the 2 subunits; these bridges are implicated in subunit movement. Contacts the tRNAs in the A and P-sites. The sequence is that of Small ribosomal subunit protein uS13 from Corynebacterium jeikeium (strain K411).